The following is a 248-amino-acid chain: Triosephosphate isomerase (248 aa).

Substrate is bound at residue 9–11 (NWK). The Electrophile role is filled by His92. The Proton acceptor role is filled by Glu164. Substrate contacts are provided by residues Gly170, Ser210, and 231–232 (GG).

It belongs to the triosephosphate isomerase family. As to quaternary structure, homodimer.

Its subcellular location is the cytoplasm. The catalysed reaction is D-glyceraldehyde 3-phosphate = dihydroxyacetone phosphate. Its pathway is carbohydrate biosynthesis; gluconeogenesis. The protein operates within carbohydrate degradation; glycolysis; D-glyceraldehyde 3-phosphate from glycerone phosphate: step 1/1. Its function is as follows. Involved in the gluconeogenesis. Catalyzes stereospecifically the conversion of dihydroxyacetone phosphate (DHAP) to D-glyceraldehyde-3-phosphate (G3P). The polypeptide is Triosephosphate isomerase (Mycoplasma capricolum subsp. capricolum (strain California kid / ATCC 27343 / NCTC 10154)).